Here is a 476-residue protein sequence, read N- to C-terminus: Retinoic acid receptor gamma (476 aa).

The modulating stretch occupies residues 1–109 (MANSSKERLC…PPPPPRVYKP (109 aa)). Low complexity predominate over residues 81 to 96 (STVETQSTSSEEMVPS). Residues 81–102 (STVETQSTSSEEMVPSSPSPPP) are disordered. NR C4-type zinc fingers lie at residues 110 to 130 (CFVCNDKSSGYHYGVSSCEGC) and 146 to 170 (CHRDKNCQINKVTRNRCQFCRLQKC). Residues 110–175 (CFVCNDKSSG…RLQKCFQVGM (66 aa)) constitute a DNA-binding region (nuclear receptor). The tract at residues 176–205 (SKEAVRNDRNKKKKEIKEEVVLPDSYEMPP) is hinge. The short motif at 184 to 189 (RNKKKK) is the Nuclear localization signal element. Positions 206 to 440 (EMEELIQKVS…PLIREMLENP (235 aa)) constitute an NR LBD domain. A disordered region spans residues 435–476 (EMLENPEAFEDGAATPKPSERSSSESSNGSPTGEDSSGSKTP). Residues 462–476 (NGSPTGEDSSGSKTP) show a composition bias toward polar residues.

Belongs to the nuclear hormone receptor family. NR1 subfamily. As to quaternary structure, heterodimer; with a rxr molecule. Binds DNA preferentially as a rar/rxr heterodimer. In terms of tissue distribution, expressed in embryos, tadpoles and various adult tissue such as kidney, testis, brain, liver, skeletal muscle and spleen.

Its subcellular location is the nucleus. Its function is as follows. Receptor for retinoic acid. Retinoic acid receptors bind as heterodimers to their target response elements in response to their ligands, all-trans or 9-cis retinoic acid, and regulate gene expression in various biological processes. The rar/rxr heterodimers bind to the retinoic acid response elements (RARE) composed of tandem 5'-AGGTCA-3' sites known as DR1-DR5. The sequence is that of Retinoic acid receptor gamma (rarg) from Xenopus laevis (African clawed frog).